Consider the following 143-residue polypeptide: Transcriptional regulator MraZ (143 aa).

SpoVT-AbrB domains follow at residues Thr-5–Glu-47 and Ala-76–Ala-119.

It belongs to the MraZ family. As to quaternary structure, forms oligomers.

Its subcellular location is the cytoplasm. The protein localises to the nucleoid. This chain is Transcriptional regulator MraZ, found in Paenarthrobacter aurescens (strain TC1).